Reading from the N-terminus, the 920-residue chain is Disintegrin and metalloproteinase domain-containing protein 19 (920 aa).

The first 26 residues, 1 to 26 (MPGRAGVARFCLLALALQLHWPLAAC), serve as a signal peptide directing secretion. The propeptide occupies 27-204 (EPGWTTRGSQ…TKKQPRRMKR (178 aa)). Topologically, residues 27 to 703 (EPGWTTRGSQ…VDSGPLPPKS (677 aa)) are extracellular. The Cysteine switch motif lies at 131-138 (STCRGIRG). Residue cysteine 133 participates in Zn(2+) binding. A glycan (N-linked (GlcNAc...) asparagine) is linked at asparagine 145. Residues 211-409 (KYVELYLVAD…GGGMCLSNMP (199 aa)) form the Peptidase M12B domain. 3 disulfide bridges follow: cysteine 321/cysteine 404, cysteine 361/cysteine 388, and cysteine 362/cysteine 371. Residue histidine 346 participates in Zn(2+) binding. Residue glutamate 347 is part of the active site. Histidine 350 and histidine 356 together coordinate Zn(2+). The Disintegrin domain occupies 417–503 (GRRCGNGYLE…HCPTNYYQMD (87 aa)). N-linked (GlcNAc...) asparagine glycans are attached at residues asparagine 445 and asparagine 448. Cysteine 475 and cysteine 495 form a disulfide bridge. N-linked (GlcNAc...) asparagine glycosylation occurs at asparagine 649. Positions 654–686 (ETEGCGKKCNGHGVCNNNKNCHCFPGWSPPFCN) constitute an EGF-like domain. Disulfide bonds link cysteine 658–cysteine 668, cysteine 662–cysteine 674, and cysteine 676–cysteine 685. The chain crosses the membrane as a helical span at residues 704–724 (VGPVIAGVFSALFVLAVLVLL). The Cytoplasmic segment spans residues 725–920 (CHCYRQSHKL…RVGAIISSKI (196 aa)). The interval 755-920 (SQSGGTGHAN…RVGAIISSKI (166 aa)) is disordered. Residues 767–783 (FKLQTPQGKRKVTNTPE) show a composition bias toward polar residues. Basic and acidic residues predominate over residues 825 to 834 (ARIERKESAR). Residues 835 to 846 (RPPPSRPMPPAP) carry the SH3-binding motif. Composition is skewed to pro residues over residues 835–846 (RPPPSRPMPPAP) and 888–903 (TSGP…PVPK).

In terms of assembly, interacts with SH3PXD2A. Zn(2+) serves as cofactor. The precursor is cleaved by a furin endopeptidase. Widely expressed, with the highest expression in bone, heart and lung, followed by brain and spleen and relatively low expression in liver, skeletal muscle, kidney and testis. In bone, primarily expressed in cell of the osteoblast lineage and not detected in mature osteoclasts.

It is found in the membrane. Its function is as follows. Participates in the proteolytic processing of beta-type neuregulin isoforms which are involved in neurogenesis and synaptogenesis, suggesting a regulatory role in glial cell. Also cleaves alpha-2 macroglobulin. May be involved in osteoblast differentiation and/or osteoblast activity in bone. The chain is Disintegrin and metalloproteinase domain-containing protein 19 (Adam19) from Mus musculus (Mouse).